We begin with the raw amino-acid sequence, 530 residues long: Phosphoenolpyruvate carboxykinase (ATP) (530 aa).

The substrate site is built by Arg-58, Tyr-195, and Lys-201. Residues Lys-201, His-220, and 236-244 (GLSGTGKTT) contribute to the ATP site. Mn(2+)-binding residues include Lys-201 and His-220. Asp-257 contributes to the Mn(2+) binding site. Residues Glu-285, Arg-321, 440-441 (RI), and Thr-446 each bind ATP. Arg-321 provides a ligand contact to substrate.

Belongs to the phosphoenolpyruvate carboxykinase (ATP) family. The cofactor is Mn(2+).

It is found in the cytoplasm. It carries out the reaction oxaloacetate + ATP = phosphoenolpyruvate + ADP + CO2. It functions in the pathway carbohydrate biosynthesis; gluconeogenesis. Functionally, involved in the gluconeogenesis. Catalyzes the conversion of oxaloacetate (OAA) to phosphoenolpyruvate (PEP) through direct phosphoryl transfer between the nucleoside triphosphate and OAA. The polypeptide is Phosphoenolpyruvate carboxykinase (ATP) (Staphylococcus aureus (strain MSSA476)).